A 1547-amino-acid polypeptide reads, in one-letter code: DNA topoisomerase 2 (1547 aa).

The segment at phenylalanine 8 to glycine 30 is disordered. A compositionally biased stretch (polar residues) spans asparagine 9 to threonine 19. ATP-binding positions include asparagine 99, asparagine 128, serine 156–asparagine 158, and glycine 169–lysine 176. The tract at residues lysine 351–lysine 353 is interaction with DNA. Glutamine 385–lysine 387 contributes to the ATP binding site. In terms of domain architecture, Toprim spans cysteine 463 to glutamate 580. Residues glutamate 469, aspartate 549, and aspartate 551 each coordinate Mg(2+). Positions isoleucine 723 to leucine 1192 constitute a Topo IIA-type catalytic domain. Catalysis depends on tyrosine 813, which acts as the O-(5'-phospho-DNA)-tyrosine intermediate. The tract at residues lysine 996–cysteine 1005 is interaction with DNA. Disordered regions lie at residues threonine 1107–aspartate 1134, glutamate 1209–aspartate 1249, lysine 1261–aspartate 1423, and arginine 1459–aspartate 1547. A compositionally biased stretch (acidic residues) spans leucine 1109–glutamate 1123. Residues proline 1124–aspartate 1134 show a composition bias toward basic and acidic residues. Residues lysine 1216–lysine 1228 are compositionally biased toward basic residues. 2 stretches are compositionally biased toward basic and acidic residues: residues asparagine 1238–aspartate 1249 and glutamate 1294–lysine 1315. Residues threonine 1331–aspartate 1344 show a composition bias toward low complexity. The span at aspartate 1373–leucine 1383 shows a compositional bias: acidic residues. Basic and acidic residues-rich tracts occupy residues leucine 1384 to alanine 1394 and arginine 1459 to lysine 1488. Basic residues predominate over residues lysine 1513–lysine 1528. The segment covering aspartate 1537–aspartate 1547 has biased composition (polar residues).

Belongs to the type II topoisomerase family. Homodimer. Requires Mg(2+) as cofactor. The cofactor is Mn(2+). It depends on Ca(2+) as a cofactor.

The protein localises to the nucleus. It catalyses the reaction ATP-dependent breakage, passage and rejoining of double-stranded DNA.. In terms of biological role, control of topological states of DNA by transient breakage and subsequent rejoining of DNA strands. Topoisomerase II makes double-strand breaks. The chain is DNA topoisomerase 2 (TOP2) from Bombyx mori (Silk moth).